The chain runs to 103 residues: Small ribosomal subunit protein uS10 (103 aa).

The protein belongs to the universal ribosomal protein uS10 family. Part of the 30S ribosomal subunit.

Functionally, involved in the binding of tRNA to the ribosomes. This Borreliella burgdorferi (strain ATCC 35210 / DSM 4680 / CIP 102532 / B31) (Borrelia burgdorferi) protein is Small ribosomal subunit protein uS10.